The sequence spans 795 residues: Delta-1-pyrroline-5-carboxylate synthase (795 aa).

Residues 1–361 (MLSQVYRYGF…FFSEVKPAGP (361 aa)) are glutamate 5-kinase. Residues Ser117, Asp223, and Asn246 each contribute to the substrate site. ATP is bound by residues 266–267 (SD) and 305–311 (MGGMEAK). N6-succinyllysine occurs at positions 311, 347, and 550. Positions 362 to 795 (TVEQQGEMAR…NLPIPQRNTN (434 aa)) are gamma-glutamyl phosphate reductase.

In the N-terminal section; belongs to the glutamate 5-kinase family. It in the C-terminal section; belongs to the gamma-glutamyl phosphate reductase family. Can form homodimers/multimers.

Its subcellular location is the mitochondrion matrix. It carries out the reaction L-glutamate + ATP = L-glutamyl 5-phosphate + ADP. The enzyme catalyses L-glutamate 5-semialdehyde + phosphate + NADP(+) = L-glutamyl 5-phosphate + NADPH + H(+). The protein operates within amino-acid biosynthesis; L-proline biosynthesis; L-glutamate 5-semialdehyde from L-glutamate: step 1/2. It functions in the pathway amino-acid biosynthesis; L-proline biosynthesis; L-glutamate 5-semialdehyde from L-glutamate: step 2/2. In terms of biological role, bifunctional enzyme that converts glutamate to glutamate 5-semialdehyde, an intermediate in the biosynthesis of proline, ornithine and arginine. This Pongo abelii (Sumatran orangutan) protein is Delta-1-pyrroline-5-carboxylate synthase (ALDH18A1).